The chain runs to 781 residues: Catenin beta-1 (781 aa).

Alanine 2 bears the N-acetylalanine mark. Residues alanine 2–serine 23 are interaction with VCL. A Phosphoserine; by GSK3-beta; alternate modification is found at serine 23. A glycan (O-linked (GlcNAc) serine; alternate) is linked at serine 23. Serine 29 is subject to Phosphoserine; by GSK3-beta. Phosphoserine; by GSK3-beta and HIPK2 is present on residues serine 33 and serine 37. Positions glycine 34–valine 57 are disordered. Threonine 41 is modified (phosphothreonine; by GSK3-beta). Serine 45 carries the phosphoserine modification. N6-acetyllysine is present on lysine 49. Tyrosine 64 bears the Phosphotyrosine; by PTK6 mark. At tyrosine 142 the chain carries Phosphotyrosine; by FYN and PTK6. 12 ARM repeats span residues arginine 151 to serine 191, glutamine 193 to serine 234, glycine 235 to alanine 276, glycine 277 to serine 318, glycine 319 to alanine 360, glycine 361 to serine 389, glycine 400 to valine 441, glycine 442 to alanine 484, tyrosine 489 to glutamine 530, glycine 531 to glutamate 571, asparagine 594 to alanine 636, and threonine 637 to lysine 666. An interaction with BCL9 region spans residues leucine 156–leucine 178. Serine 191 bears the Phosphoserine mark. The residue at position 246 (serine 246) is a Phosphoserine; by CDK5. Tyrosine 331 and tyrosine 333 each carry phosphotyrosine. Serine 552 carries the phosphoserine modification. Position 556 is a phosphothreonine (threonine 556). Cysteine 619 is modified (S-nitrosocysteine). At serine 675 the chain carries Phosphoserine. Positions histidine 720–leucine 781 are disordered. Residues methionine 734–glycine 745 show a composition bias toward basic and acidic residues. The tract at residues asparagine 772–leucine 781 is interaction with SCRIB.

The protein belongs to the beta-catenin family. In terms of assembly, two separate complex-associated pools are found in the cytoplasm. The majority is present as component of an E-cadherin/ catenin adhesion complex composed of at least E-cadherin/CDH1 and beta-catenin/CTNNB1, and possibly alpha-catenin/CTNNA1; the complex is located to adherens junctions. The stable association of CTNNA1 is controversial as CTNNA1 was shown not to bind to F-actin when assembled in the complex. Alternatively, the CTNNA1-containing complex may be linked to F-actin by other proteins such as LIMA1. Another cytoplasmic pool is part of a large complex containing AXIN1, AXIN2, APC, CSNK1A1 and GSK3B that promotes phosphorylation on N-terminal Ser and Thr residues and ubiquitination of CTNNB1. Interacts directly with AXIN1; the interaction is regulated by CK2 via BTRC and its subsequent degradation by the proteasome. Interacts directly with AXIN1; the interaction is regulated by CDK2 phosphorylation. Wnt-dependent activation of DVL antagonizes the action of GSK3B. When GSK3B activity is inhibited the complex dissociates, CTNNB1 is dephosphorylated and is no longer targeted for destruction. The stabilized protein translocates to the nucleus, where it binds TCF/LEF-1 family members, BCL9, BCL9L and possibly also RUVBL1 and CHD8. Binds CTNNBIP and EP300. CTNNB1 forms a ternary complex with LEF1 and EP300 that is disrupted by CTNNBIP1 binding. Interacts with TAX1BP3 (via the PDZ domain); this interaction inhibits the transcriptional activity of CTNNB1. Interacts with AJAP1, BAIAP1, CARM1, CTNNA3, CXADR and PCDH11Y. Binds NHERF1. Interacts with GLIS2. Interacts with XIRP1. Interacts with PTPRU (via the cytoplasmic juxtamembrane domain) and with SLC30A9. Interacts with EMD. Interacts with SCRIB. Interacts with TNIK and TCF7L2. Interacts with SESTD1 and TRPC4. Interacts directly with AXIN1; the interaction is regulated by CDK2 phosphorylation of AXIN1. Interacts with CAV1. Interacts with TRPV4. The TRPV4 and CTNNB1 complex can interact with CDH1. Interacts with VCL. Interacts with PTPRJ. Interacts with PKT7. Interacts with NANOS1. Interacts with CDK2, NDRG2, NEK2 and CDK5. Found in a complex composed of MACF1, APC, AXIN1, CTNNB1 and GSK3B. Interacts with PTK6. Interacts with SOX7; this interaction may lead to proteasomal degradation of active CTNNB1 and thus inhibition of Wnt/beta-catenin-stimulated transcription. Identified in a complex with HINT1 and MITF. Interacts with FHIT. The CTNNB1 and TCF4 complex interacts with PML. Interacts with FERMT2. Identified in a complex with TCF4 and FERMT2. Interacts with RAPGEF2. Interacts with FAT1 (via the cytoplasmic domain). Interacts with RORA. May interact with P-cadherin/CDH3. Interacts with RNF220. Interacts with CTNND2. Interacts (via the C-terminal region) with CBY1. The complex composed, at least, of APC, CTNNB1 and GSK3B interacts with JPT1; the interaction requires the inactive form of GSK3B (phosphorylated at 'Ser-9'). Interacts with DLG5. Interacts with FAM53B; promoting translocation to the nucleus. Interacts with TMEM170B. Interacts with AHI1. Interacts with GID8. Component of an cadherin:catenin adhesion complex composed of at least of CDH26, beta-catenin/CTNNB1, alpha-catenin/CTNNA1 and p120 catenin/CTNND1. Forms a complex comprising APPL1, RUVBL2, APPL2, HDAC1 and HDAC2. Interacts with IRF2BPL; mediates the ubiquitination and degradation of CTNNB1. Interacts with AMFR. Interacts with LMBR1L. Interacts with SOX30; prevents interaction of CTNNB1 with TCF7L2/TCF4 and leads to inhibition of Wnt signaling. Interacts with SOX9; inhibiting CTNNB1 activity by competing with the binding sites of TCF/LEF within CTNNB1, thereby inhibiting the Wnt signaling. Interacts with SPN/CD43 cytoplasmic tail. Interacts (when phosphorylated at Tyr-333) with isoform M2 of PKM (PKM2); promoting transcription activation. Interacts with PKP2 (via HEAD domain). Interacts with CDH1. Interacts (when unphosphorylated) with FLYWCH1, perhaps preventing interaction of CTNNB1 with TCF4, and thereby regulating transcription activation; phosphorylation of CTNNB1 may inhibit the interaction. Interacts (via the central armadillo domains) with probable transcriptional regulator ADNP (via N-terminal region); interaction is direct and stabilizes CTNNB1 by modulating its phosphorylation by glycogen synthase kinase-3 beta GSK3B. Interacts with NR5A2. Interacts with DSG2; the interaction promotes localization of CTNNB1 at cell junctions thus reducing its nuclear localization and subsequent transcription of CTNNB1/TCF-target genes. In terms of processing, phosphorylation by GSK3B requires prior phosphorylation of Ser-45 by another kinase. Phosphorylation proceeds then from Thr-41 to Ser-33. Phosphorylated by NEK2. EGF stimulates tyrosine phosphorylation. Phosphorylated on Ser-33 and Ser-37 by HIPK2. This phosphorylation triggers proteasomal degradation. Phosphorylation at Ser-552 by AMPK promotes stabilization of the protein, enhancing TCF/LEF-mediated transcription. Phosphorylation on Ser-191 and Ser-246 by CDK5. Phosphorylation by CDK2 regulates insulin internalization. Phosphorylation by PTK6 at Tyr-64, Tyr-142, Tyr-331 and/or Tyr-333 with the predominant site at Tyr-64 is not essential for inhibition of transcriptional activity. Phosphorylation by SRC at Tyr-333 promotes interaction with isoform M2 of PKM (PKM2); promoting transcription activation. Post-translationally, ubiquitinated by the SCF(BTRC) E3 ligase complex when phosphorylated by GSK3B, leading to its degradation. Ubiquitinated by a E3 ubiquitin ligase complex containing UBE2D1, SIAH1, CACYBP/SIP, SKP1, APC and TBL1X, leading to its subsequent proteasomal degradation. Ubiquitinated and degraded following interaction with SOX9. Ubiquitinated via 'Lys-11'- and 'Lys-29'-linked ubiquitin chains by UBR5, leading to its stabilization. S-nitrosylation at Cys-619 within adherens junctions promotes VEGF-induced, NO-dependent endothelial cell permeability by disrupting interaction with E-cadherin, thus mediating disassembly adherens junctions. In terms of processing, O-glycosylation at Ser-23 decreases nuclear localization and transcriptional activity, and increases localization to the plasma membrane and interaction with E-cadherin CDH1. Post-translationally, deacetylated at Lys-49 by SIRT1. In terms of tissue distribution, expressed in the testis.

The protein resides in the cytoplasm. It localises to the nucleus. It is found in the cytoskeleton. The protein localises to the cell junction. Its subcellular location is the adherens junction. The protein resides in the cell membrane. It localises to the microtubule organizing center. It is found in the centrosome. The protein localises to the spindle pole. Its subcellular location is the synapse. The protein resides in the cilium basal body. Key downstream component of the canonical Wnt signaling pathway. In the absence of Wnt, forms a complex with AXIN1, AXIN2, APC, CSNK1A1 and GSK3B that promotes phosphorylation on N-terminal Ser and Thr residues and ubiquitination of CTNNB1 via BTRC and its subsequent degradation by the proteasome. In the presence of Wnt ligand, CTNNB1 is not ubiquitinated and accumulates in the nucleus, where it acts as a coactivator for transcription factors of the TCF/LEF family, leading to activate Wnt responsive genes. Also acts as a coactivator for other transcription factors, such as NR5A2. Promotes epithelial to mesenchymal transition/mesenchymal to epithelial transition (EMT/MET) via driving transcription of CTNNB1/TCF-target genes. Involved in the regulation of cell adhesion, as component of an E-cadherin:catenin adhesion complex. Acts as a negative regulator of centrosome cohesion. Involved in the CDK2/PTPN6/CTNNB1/CEACAM1 pathway of insulin internalization. Blocks anoikis of malignant kidney and intestinal epithelial cells and promotes their anchorage-independent growth by down-regulating DAPK2. Disrupts PML function and PML-NB formation by inhibiting RANBP2-mediated sumoylation of PML. Promotes neurogenesis by maintaining sympathetic neuroblasts within the cell cycle. Involved in chondrocyte differentiation via interaction with SOX9: SOX9-binding competes with the binding sites of TCF/LEF within CTNNB1, thereby inhibiting the Wnt signaling. Acts as a positive regulator of odontoblast differentiation during mesenchymal tooth germ formation, via promoting the transcription of differentiation factors such as LEF1, BMP2 and BMP4. Activity is repressed in a MSX1-mediated manner at the bell stage of mesenchymal tooth germ formation which prevents premature differentiation of odontoblasts. This chain is Catenin beta-1, found in Rattus norvegicus (Rat).